The sequence spans 549 residues: Carboxylesterase 1C (549 aa).

An N-terminal signal peptide occupies residues 1–18; that stretch reads MWLCALVWASLAVCPIWG. Asparagine 79 is a glycosylation site (N-linked (GlcNAc...) asparagine). Cysteines 87 and 116 form a disulfide. The active-site Acyl-ester intermediate is serine 221. Cysteine 273 and cysteine 284 form a disulfide bridge. Asparagine 274, asparagine 275, and asparagine 302 each carry an N-linked (GlcNAc...) asparagine glycan. Catalysis depends on glutamate 340, which acts as the Charge relay system. Asparagine 375 carries N-linked (GlcNAc...) asparagine glycosylation. Residue histidine 453 is the Charge relay system of the active site. Residue serine 471 is modified to Phosphoserine. N-linked (GlcNAc...) asparagine glycosylation occurs at asparagine 476. Residues 546 to 549 carry the Prevents secretion from ER motif; sequence TEHT.

Belongs to the type-B carboxylesterase/lipase family.

The protein localises to the endoplasmic reticulum lumen. It carries out the reaction a carboxylic ester + H2O = an alcohol + a carboxylate + H(+). Functionally, involved in the detoxification of xenobiotics and in the activation of ester and amide prodrugs. Involved in the extracellular metabolism of lung surfactant. This Rattus norvegicus (Rat) protein is Carboxylesterase 1C (Ces1c).